The sequence spans 160 residues: Ribosomal RNA large subunit methyltransferase H (160 aa).

S-adenosyl-L-methionine is bound by residues L76 and G108.

This sequence belongs to the RNA methyltransferase RlmH family. As to quaternary structure, homodimer.

It is found in the cytoplasm. It carries out the reaction pseudouridine(1915) in 23S rRNA + S-adenosyl-L-methionine = N(3)-methylpseudouridine(1915) in 23S rRNA + S-adenosyl-L-homocysteine + H(+). Specifically methylates the pseudouridine at position 1915 (m3Psi1915) in 23S rRNA. The chain is Ribosomal RNA large subunit methyltransferase H from Bradyrhizobium sp. (strain BTAi1 / ATCC BAA-1182).